Reading from the N-terminus, the 181-residue chain is ATP synthase subunit b 2 (181 aa).

The segment covering 1-12 (MAEGHGTTAHTG) has biased composition (low complexity). Positions 1–20 (MAEGHGTTAHTGAEGGHKAP) are disordered. Residues 33-53 (LVSLLIAFVALYLIVSKVALP) form a helical membrane-spanning segment.

This sequence belongs to the ATPase B chain family. As to quaternary structure, F-type ATPases have 2 components, F(1) - the catalytic core - and F(0) - the membrane proton channel. F(1) has five subunits: alpha(3), beta(3), gamma(1), delta(1), epsilon(1). F(0) has three main subunits: a(1), b(2) and c(10-14). The alpha and beta chains form an alternating ring which encloses part of the gamma chain. F(1) is attached to F(0) by a central stalk formed by the gamma and epsilon chains, while a peripheral stalk is formed by the delta and b chains.

Its subcellular location is the cell inner membrane. In terms of biological role, f(1)F(0) ATP synthase produces ATP from ADP in the presence of a proton or sodium gradient. F-type ATPases consist of two structural domains, F(1) containing the extramembraneous catalytic core and F(0) containing the membrane proton channel, linked together by a central stalk and a peripheral stalk. During catalysis, ATP synthesis in the catalytic domain of F(1) is coupled via a rotary mechanism of the central stalk subunits to proton translocation. Its function is as follows. Component of the F(0) channel, it forms part of the peripheral stalk, linking F(1) to F(0). The b'-subunit is a diverged and duplicated form of b found in plants and photosynthetic bacteria. This Rhodopseudomonas palustris (strain BisA53) protein is ATP synthase subunit b 2 (atpF2).